Consider the following 345-residue polypeptide: D-apiose dehydrogenase (345 aa).

Position 15-16 (15-16 (FF)) interacts with NAD(+). Positions 24, 25, 27, and 30 each coordinate Mg(2+). Residues D37, S79, 97–98 (QK), N126, and 165–167 (QPY) each bind NAD(+). K98 contacts substrate. The substrate site is built by Q165, D178, H182, and Y232.

It belongs to the Gfo/Idh/MocA family.

The catalysed reaction is D-apiofuranose + NAD(+) = D-apionolactone + NADH + H(+). The protein operates within carbohydrate metabolism. In terms of biological role, involved in catabolism of D-apiose. Catalyzes oxidation of D-apiose to D-apionolactone. The sequence is that of D-apiose dehydrogenase from Rhizobium rhizogenes (strain K84 / ATCC BAA-868) (Agrobacterium radiobacter).